Reading from the N-terminus, the 632-residue chain is DNA mismatch repair protein MutL (632 aa).

Residues 376–397 (EQPQAEPRQSFTPGSGAGSGYQ) are disordered.

Belongs to the DNA mismatch repair MutL/HexB family.

This protein is involved in the repair of mismatches in DNA. It is required for dam-dependent methyl-directed DNA mismatch repair. May act as a 'molecular matchmaker', a protein that promotes the formation of a stable complex between two or more DNA-binding proteins in an ATP-dependent manner without itself being part of a final effector complex. This Pseudomonas entomophila (strain L48) protein is DNA mismatch repair protein MutL.